We begin with the raw amino-acid sequence, 501 residues long: NAD(P)H-quinone oxidoreductase subunit 2, chloroplastic (501 aa).

A run of 14 helical transmembrane segments spans residues 15-35 (ILPE…DLTF), 40-60 (TIWL…ILLF), 82-102 (IFQS…IEYI), 107-127 (MAIP…MFLC), 132-152 (LVTI…LCGY), 167-187 (LLIG…LYGL), 212-232 (TFIA…LVPF), 244-264 (PTPV…ALAT), 278-298 (WKIF…LVAI), 307-327 (LAYS…TGDL), 333-353 (MTIY…CIIL), 378-398 (FSLT…GFFG), 410-430 (GFYL…YYYL), and 466-486 (FVMI…NPIF).

The protein belongs to the complex I subunit 2 family. As to quaternary structure, NDH is composed of at least 16 different subunits, 5 of which are encoded in the nucleus.

The protein localises to the plastid. Its subcellular location is the chloroplast thylakoid membrane. The catalysed reaction is a plastoquinone + NADH + (n+1) H(+)(in) = a plastoquinol + NAD(+) + n H(+)(out). The enzyme catalyses a plastoquinone + NADPH + (n+1) H(+)(in) = a plastoquinol + NADP(+) + n H(+)(out). In terms of biological role, NDH shuttles electrons from NAD(P)H:plastoquinone, via FMN and iron-sulfur (Fe-S) centers, to quinones in the photosynthetic chain and possibly in a chloroplast respiratory chain. The immediate electron acceptor for the enzyme in this species is believed to be plastoquinone. Couples the redox reaction to proton translocation, and thus conserves the redox energy in a proton gradient. The polypeptide is NAD(P)H-quinone oxidoreductase subunit 2, chloroplastic (Marchantia polymorpha (Common liverwort)).